The primary structure comprises 267 residues: Protein isy-1 (267 aa).

Residues 175–204 are a coiled coil; that stretch reads LEKLIEEKNIERINKEFAEKQAQKQQTASD. The segment at 195–221 is disordered; it reads QAQKQQTASDAAPENIYKVEEDDDDDL.

This sequence belongs to the ISY1 family. Ubiquitously expressed.

The protein resides in the nucleus. Functionally, regulates the processing of the mir-60 microRNA (miRNA), which in turn negatively regulates the expression of the transcription factor zip-10. Does not affect the splicing of zip-10. This chain is Protein isy-1, found in Caenorhabditis elegans.